The following is a 1122-amino-acid chain: Receptor-type guanylate cyclase gcy-5 (1122 aa).

A signal peptide spans 1–19 (MRLLYFSMVLLWVLGASEC). The Extracellular segment spans residues 20–486 (QVIPSSRRTL…CPVQFWDQYG (467 aa)). N-linked (GlcNAc...) asparagine glycans are attached at residues N252, N299, N344, N350, N378, N434, and N439. Residues 487 to 507 (VLIFVASIVLIFLICIMLMCF) form a helical membrane-spanning segment. The Cytoplasmic portion of the chain corresponds to 508–1122 (GFMIRGRRAE…KSKMDTLKVV (615 aa)). The disordered stretch occupies residues 536-562 (QKEKRKPNSRRSLQSGPSTITGESKMT). Residues 542–830 (PNSRRSLQSG…NTNLMDHVFN (289 aa)) enclose the Protein kinase domain. Polar residues predominate over residues 545–559 (RRSLQSGPSTITGES). The region spanning 888–1018 (TVLFSDVVKF…DTVNTASRME (131 aa)) is the Guanylate cyclase domain. The segment at 1071–1122 (SDTKSLSTRTTPPITDENWPPQMKEDLKKRAVTPYPERQRSGKSKMDTLKVV) is disordered. Polar residues predominate over residues 1074–1083 (KSLSTRTTPP). The segment covering 1107–1122 (ERQRSGKSKMDTLKVV) has biased composition (basic and acidic residues).

This sequence belongs to the adenylyl cyclase class-4/guanylyl cyclase family. As to expression, expressed in both ASEL and ASER neurons during early embryonic stages and becomes specifically expressed in ASER neuron in early larval stage.

Its subcellular location is the cell membrane. The enzyme catalyses GTP = 3',5'-cyclic GMP + diphosphate. Its function is as follows. Guanylate cyclase involved in the production of the second messenger cGMP. Unlike other guanylate cyclases expressed in ASE neurons, may not play a role in chemotaxis responses to salt ions mediated by ASE sensory neurons. This chain is Receptor-type guanylate cyclase gcy-5, found in Caenorhabditis elegans.